An 80-amino-acid chain; its full sequence is Acyl carrier protein (80 aa).

Residues 4 to 79 (DATLEKVRSI…DAVKYIEDKQ (76 aa)) form the Carrier domain. Ser39 is modified (O-(pantetheine 4'-phosphoryl)serine).

It belongs to the acyl carrier protein (ACP) family. Post-translationally, 4'-phosphopantetheine is transferred from CoA to a specific serine of apo-ACP by AcpS. This modification is essential for activity because fatty acids are bound in thioester linkage to the sulfhydryl of the prosthetic group.

It is found in the cytoplasm. The protein operates within lipid metabolism; fatty acid biosynthesis. In terms of biological role, carrier of the growing fatty acid chain in fatty acid biosynthesis. In Prochlorococcus marinus (strain MIT 9211), this protein is Acyl carrier protein.